We begin with the raw amino-acid sequence, 366 residues long: Putative neutrophil cytosol factor 1C (366 aa).

One can recognise a PX domain in the interval 1–101; the sequence is MYMFLVKWQD…DFFKVRPDDL (101 aa). SH3 domains lie at 132-191 and 202-261; these read IILQ…PLDS and YAGE…KSGQ. The tract at residues 261–366 is disordered; it reads QDVSQAQRQI…STKRKLASAV (106 aa). Residues serine 279 and serine 280 each carry the phosphoserine modification. The segment covering 285–294 has biased composition (basic residues); that stretch reads HSIHQRSRKR. A phosphoserine mark is found at serine 296, serine 304, serine 321, and serine 324.

The protein localises to the cytoplasm. May be required for activation of the latent NADPH oxidase (necessary for superoxide production). This chain is Putative neutrophil cytosol factor 1C (NCF1C), found in Homo sapiens (Human).